A 657-amino-acid polypeptide reads, in one-letter code: Glycogen debranching enzyme (657 aa).

Asp-336 acts as the Nucleophile in catalysis. Glu-371 serves as the catalytic Proton donor. Residues 458–467 are compositionally biased toward basic and acidic residues; sequence NEANGEENRD. Residues 458-479 form a disordered region; sequence NEANGEENRDGTNNNYSNNHGK.

The protein belongs to the glycosyl hydrolase 13 family.

It carries out the reaction Hydrolysis of (1-&gt;6)-alpha-D-glucosidic linkages to branches with degrees of polymerization of three or four glucose residues in limit dextrin.. It functions in the pathway glycan degradation; glycogen degradation. In terms of biological role, removes maltotriose and maltotetraose chains that are attached by 1,6-alpha-linkage to the limit dextrin main chain, generating a debranched limit dextrin. This Escherichia coli O139:H28 (strain E24377A / ETEC) protein is Glycogen debranching enzyme.